The sequence spans 310 residues: MEEVRDCRLEEGLSVEGLVECYRDIHGFMAGHLAEAVEVLREGLEASSVRVLTFTGNLVATGLRGVLAQLIDGGLFNVVFTTAGALDHDIARFMGGKYLKGRFEADDTELHRRGVHRLGNVFIPVESYGPLVERFVRTLAEQAAGVRGEWGVYELLRLAGSLMEGDRDSILAAAARRGVDVFVPGWPDGAFGTSLFMERQRGTSITVDYFRDMARLADIFFPQEGEAAALIVGGGISKHHAIWWSQFRGGLDYAVYVTTAVEYDGSLSGAHPREAVSWGKIKESSRRVVVYGDATITLPVIAYCLLHGCG.

The active-site Nucleophile is lysine 280.

Belongs to the deoxyhypusine synthase family. The cofactor is NAD(+).

It carries out the reaction [eIF5A protein]-L-lysine + spermidine = [eIF5A protein]-deoxyhypusine + propane-1,3-diamine. Its pathway is protein modification; eIF5A hypusination. Its function is as follows. Catalyzes the NAD-dependent oxidative cleavage of spermidine and the subsequent transfer of the butylamine moiety of spermidine to the epsilon-amino group of a specific lysine residue of the eIF-5A precursor protein to form the intermediate deoxyhypusine residue. This is Probable deoxyhypusine synthase (dys) from Aeropyrum pernix (strain ATCC 700893 / DSM 11879 / JCM 9820 / NBRC 100138 / K1).